The chain runs to 341 residues: Ketol-acid reductoisomerase (NADP(+)) (341 aa).

The KARI N-terminal Rossmann domain maps to 1–182 (MTEMFYDDDA…GGTRAGVIKT (182 aa)). NADP(+) is bound by residues 25–28 (YGSQ), Lys48, Ser51, Ser53, and 83–86 (DQHQ). His108 is an active-site residue. Gly134 is an NADP(+) binding site. Residues 183-328 (TFTEETETDL…RELRGLFSWQ (146 aa)) form the KARI C-terminal knotted domain. 4 residues coordinate Mg(2+): Asp191, Glu195, Glu227, and Glu231. Ser252 is a binding site for substrate.

Belongs to the ketol-acid reductoisomerase family. Requires Mg(2+) as cofactor.

It catalyses the reaction (2R)-2,3-dihydroxy-3-methylbutanoate + NADP(+) = (2S)-2-acetolactate + NADPH + H(+). The enzyme catalyses (2R,3R)-2,3-dihydroxy-3-methylpentanoate + NADP(+) = (S)-2-ethyl-2-hydroxy-3-oxobutanoate + NADPH + H(+). It participates in amino-acid biosynthesis; L-isoleucine biosynthesis; L-isoleucine from 2-oxobutanoate: step 2/4. It functions in the pathway amino-acid biosynthesis; L-valine biosynthesis; L-valine from pyruvate: step 2/4. Functionally, involved in the biosynthesis of branched-chain amino acids (BCAA). Catalyzes an alkyl-migration followed by a ketol-acid reduction of (S)-2-acetolactate (S2AL) to yield (R)-2,3-dihydroxy-isovalerate. In the isomerase reaction, S2AL is rearranged via a Mg-dependent methyl migration to produce 3-hydroxy-3-methyl-2-ketobutyrate (HMKB). In the reductase reaction, this 2-ketoacid undergoes a metal-dependent reduction by NADPH to yield (R)-2,3-dihydroxy-isovalerate. This Arthrobacter sp. (strain FB24) protein is Ketol-acid reductoisomerase (NADP(+)).